The following is a 231-amino-acid chain: Thiamine import ATP-binding protein ThiQ (231 aa).

Residues 2 to 230 (LHLDRLLIRQ…PPPALRAYLG (229 aa)) form the ABC transporter domain. Residue 32–39 (GPSGGGKS) participates in ATP binding.

The protein belongs to the ABC transporter superfamily. Thiamine importer (TC 3.A.1.19.1) family. As to quaternary structure, the complex is composed of two ATP-binding proteins (ThiQ), two transmembrane proteins (ThiP) and a solute-binding protein (ThiB).

It localises to the cell inner membrane. The enzyme catalyses thiamine(out) + ATP + H2O = thiamine(in) + ADP + phosphate + H(+). Part of the ABC transporter complex ThiBPQ involved in thiamine import. Responsible for energy coupling to the transport system. The polypeptide is Thiamine import ATP-binding protein ThiQ (Cereibacter sphaeroides (strain ATCC 17023 / DSM 158 / JCM 6121 / CCUG 31486 / LMG 2827 / NBRC 12203 / NCIMB 8253 / ATH 2.4.1.) (Rhodobacter sphaeroides)).